The primary structure comprises 310 residues: Homoserine kinase (310 aa).

95–105 serves as a coordination point for ATP; the sequence is PQSRGLGSSAA.

This sequence belongs to the GHMP kinase family. Homoserine kinase subfamily.

It is found in the cytoplasm. It catalyses the reaction L-homoserine + ATP = O-phospho-L-homoserine + ADP + H(+). The protein operates within amino-acid biosynthesis; L-threonine biosynthesis; L-threonine from L-aspartate: step 4/5. Functionally, catalyzes the ATP-dependent phosphorylation of L-homoserine to L-homoserine phosphate. This Corynebacterium kroppenstedtii (strain DSM 44385 / JCM 11950 / CIP 105744 / CCUG 35717) protein is Homoserine kinase.